We begin with the raw amino-acid sequence, 627 residues long: Glutamine--fructose-6-phosphate aminotransferase [isomerizing] (627 aa).

Cys-2 acts as the Nucleophile; for GATase activity in catalysis. In terms of domain architecture, Glutamine amidotransferase type-2 spans 2–224; it reads CGIVGYIGTQ…NGEIARLTPL (223 aa). SIS domains are found at residues 293-442 and 476-617; these read LPEN…HRQT and LAHE…VDQP. Lys-622 serves as the catalytic For Fru-6P isomerization activity.

As to quaternary structure, homodimer.

It is found in the cytoplasm. It carries out the reaction D-fructose 6-phosphate + L-glutamine = D-glucosamine 6-phosphate + L-glutamate. In terms of biological role, catalyzes the first step in hexosamine metabolism, converting fructose-6P into glucosamine-6P using glutamine as a nitrogen source. This is Glutamine--fructose-6-phosphate aminotransferase [isomerizing] from Nostoc sp. (strain PCC 9229).